Reading from the N-terminus, the 113-residue chain is Replication initiation control protein YabA (113 aa).

The Zn(2+) site is built by H88, C90, C104, and C107.

The protein belongs to the YabA family. In terms of assembly, homotetramer. Interacts with both DnaA and DnaN, acting as a bridge between these two proteins. Zn(2+) is required as a cofactor.

The protein localises to the cytoplasm. It localises to the nucleoid. Its function is as follows. Involved in control of chromosome replication initiation. Inhibits the cooperative binding of DnaA to the oriC region, thus negatively regulating initiation of chromosome replication. Inhibits the ability of DnaA-ATP to form a helix on DNA; does not disassemble preformed DnaA-DNA helices. Decreases the residence time of DnaA on the chromosome at its binding sites (oriC, replication forks and promoter-binding sites). Tethers DnaA to the replication machinery via the DNA polymerase beta sliding clamp subunit (dnaN). Associates with oriC and other DnaA targets on the chromosome in a DnaA-dependent manner. The protein is Replication initiation control protein YabA of Staphylococcus saprophyticus subsp. saprophyticus (strain ATCC 15305 / DSM 20229 / NCIMB 8711 / NCTC 7292 / S-41).